A 439-amino-acid polypeptide reads, in one-letter code: tRNA modification GTPase MnmE (439 aa).

Positions 26, 88, and 127 each coordinate (6S)-5-formyl-5,6,7,8-tetrahydrofolate. The TrmE-type G domain occupies 220–367 (GARLALIGRP…LRDAIHTALI (148 aa)). Position 230 (Asn230) interacts with K(+). GTP is bound by residues 230 to 235 (NAGKSS), 249 to 255 (TPIPGTT), and 274 to 277 (DTAG). Ser234 contributes to the Mg(2+) binding site. 3 residues coordinate K(+): Thr249, Ile251, and Thr254. Thr255 provides a ligand contact to Mg(2+). (6S)-5-formyl-5,6,7,8-tetrahydrofolate is bound at residue Lys439.

It belongs to the TRAFAC class TrmE-Era-EngA-EngB-Septin-like GTPase superfamily. TrmE GTPase family. Homodimer. Heterotetramer of two MnmE and two MnmG subunits. It depends on K(+) as a cofactor.

It is found in the cytoplasm. Exhibits a very high intrinsic GTPase hydrolysis rate. Involved in the addition of a carboxymethylaminomethyl (cmnm) group at the wobble position (U34) of certain tRNAs, forming tRNA-cmnm(5)s(2)U34. This Deinococcus geothermalis (strain DSM 11300 / CIP 105573 / AG-3a) protein is tRNA modification GTPase MnmE.